We begin with the raw amino-acid sequence, 1234 residues long: MVHPVQVGKRTRMSFAKVKDVAEMPNLIEIQLDSYKWFLDAGLYEVFDDINPISNFTGNLVLEFVGYTLDMDNIKYSVEECKERDTTYAAPLKVAVRLQNKETGEIKEQEVFMGDFPLMTEQGTFIINGAERVIVSQLVRSPGVYYNYNVDKTGKKLFSATVIPNRGAWLEYETDSNDVIYVRIDKTRKLPISILGRAMGFGSDQELLEYFGEEERFKATIEKDNTKTKEEALLEIYKRLRPGEPPTVDSAISLIDSLFFDAKRYDLSRVGRYKFNKKLAIGLRIANQIAAEDIVDKLTGEVLVAKGEKISRANAEEIQNRGINSVDVLVEDRVIRIIGNHFVDIHKCVDFDISDLNIRELVHYPTLREILDNYSDEETIKEEIKKNMTRLIPKHIIKDDIFATISYQIGLAYNIGYVDDIDHLGNRRLRSVGELLQNQFRIGLSRMERVVKERMTIQDQEAITPQQLINIRPVAAAIKEFFGSSQLSQFMDQTNPLSELTHKRRLSALGPGGLSRERAGFEVRDVHHSHYGRMCPIETPEGPNIGLINSLATYAKVNEYGFIETPYRVVDKSEGRVTGEIRYFTADEEDQYLVAQANEPLDENGCFIDKKVTVRDKGEVLVVPSKDVDLMDVSPRQLVSVATAMIPFLENDDASRALMGSNMQRQAVPLLKPYAPIVGTGIEYKAAVDSGVLPKAKNAGEVVYVSANEVRVKRELDGGVDTYRLLKFKRSNQGTCINQRPIVAKGDWVLKGEVLADGPSTDLGEIALGKNIRMGFITWEGYNYEDAMLISEELVREDVFTSIHIEEYECEARDTKLGPEEITRDIPNVSEDALKDIDERGIIRIGAEVRSGDILVGKVTPKGETELTAEERLLRAIFGEKAREVRDTSLRVPHGEAGIIVDVKVFTRENGDDLSPGVNELVRCYIAQKRKISVGDKMAGRHGNKGVISRVLPEEDMPFLPDGRPLQICLNPLGVPSRMNIGQVLEVHLGWAASALGWHIATPVFDGATETDIEDCLEKAGYNRNGKTVLRDGRTGEEFDNEVTVGIMYILKLAHLVDDKIHARSTGPYSLVTQQPLGGKAQFGGQRFGEMEVWALEAYGAAHTLQEILTVKSDDVVGRVKTYEAIVKGENIPEPGVPESFKVLIKELQALCLDVKVLNDNNQEVKFKELAEDDDEIEVLEVNMEGTEDSTTEEAKEEKGEAYIPAEEIDEEIDYENIDLLDFTSDLDIEDDFN.

Belongs to the RNA polymerase beta chain family. As to quaternary structure, the RNAP catalytic core consists of 2 alpha, 1 beta, 1 beta' and 1 omega subunit. When a sigma factor is associated with the core the holoenzyme is formed, which can initiate transcription.

It carries out the reaction RNA(n) + a ribonucleoside 5'-triphosphate = RNA(n+1) + diphosphate. In terms of biological role, DNA-dependent RNA polymerase catalyzes the transcription of DNA into RNA using the four ribonucleoside triphosphates as substrates. The polypeptide is DNA-directed RNA polymerase subunit beta (Clostridium perfringens (strain SM101 / Type A)).